The following is a 121-amino-acid chain: Basic phospholipase A2 homolog BnSP-7 (121 aa).

7 disulfides stabilise this stretch: Cys26-Cys115, Cys28-Cys44, Cys43-Cys95, Cys49-Cys121, Cys50-Cys88, Cys57-Cys81, and Cys75-Cys86. Residues 105–117 (KKYRYHLKPFCKK) are important for membrane-damaging activities in eukaryotes and bacteria; heparin-binding.

It belongs to the phospholipase A2 family. Group II subfamily. K49 sub-subfamily. As to quaternary structure, homodimer; non-covalently linked (probable alternative/compact dimer conformation in solution). Expressed by the venom gland.

The protein resides in the secreted. Its activity is regulated as follows. Heparin inhibits the neuromuscular effect, myotoxin activity and edema-inducing effects. Bromophenacyl bromide (BPB) inhibits the neuromuscular effect, the myotoxin activity and edema-inducing effects. Snake venom phospholipase A2 (PLA2) that lacks enzymatic activity. Is myotoxic and displays edema-inducing activity. Displays bactericidal activity and promotes the blockage of the neuromuscular contraction of the chick biventer cervicis muscle. Also disrupts artificial membranes, and provokes tissue damages characterized by edema, necrosis and inflammation. May act as pro-inflammatory mediators, inducing metalloproteinase and cytokine production from the inflammatory and satellite cells. A model of myotoxic mechanism has been proposed: an apo Lys49-PLA2 is activated by the entrance of a hydrophobic molecule (e.g. fatty acid) at the hydrophobic channel of the protein leading to a reorientation of a monomer. This reorientation causes a transition between 'inactive' to 'active' states, causing alignment of C-terminal and membrane-docking sites (MDoS) side-by-side and putting the membrane-disruption sites (MDiS) in the same plane, exposed to solvent and in a symmetric position for both monomers. The MDoS region stabilizes the toxin on membrane by the interaction of charged residues with phospholipid head groups. Subsequently, the MDiS region destabilizes the membrane with penetration of hydrophobic residues. This insertion causes a disorganization of the membrane, allowing an uncontrolled influx of ions (i.e. calcium and sodium), and eventually triggering irreversible intracellular alterations and cell death. The sequence is that of Basic phospholipase A2 homolog BnSP-7 from Bothrops pauloensis (Neuwied's lancehead).